The sequence spans 365 residues: Gibberellin 20 oxidase 1-A (365 aa).

The Fe2OG dioxygenase domain occupies glycine 199–proline 299. Residues histidine 224, aspartate 226, and histidine 280 each contribute to the Fe cation site. Arginine 290 is an active-site residue.

This sequence belongs to the iron/ascorbate-dependent oxidoreductase family. GA20OX subfamily. Requires Fe cation as cofactor. L-ascorbate is required as a cofactor. In terms of tissue distribution, expressed in nodes and the ear of the elongating stem.

It catalyses the reaction gibberellin A12 + 2 2-oxoglutarate + 3 O2 + H(+) = gibberellin A9 + 2 succinate + 3 CO2 + 2 H2O. It carries out the reaction gibberellin A53 + 2 2-oxoglutarate + 3 O2 + H(+) = gibberellin A20 + 2 succinate + 3 CO2 + 2 H2O. Key oxidase enzyme in the biosynthesis of gibberellin that catalyzes the conversion of GA12 and GA53 to GA9 and GA20 respectively, via a three-step oxidation at C-20 of the GA skeleton. In Triticum aestivum (Wheat), this protein is Gibberellin 20 oxidase 1-A (GA20ox1A).